The sequence spans 20 residues: Thrombin-like enzyme okinaxobin-2 (20 aa).

Residues 1 to 20 enclose the Peptidase S1 domain; the sequence is VVGGDECNINEHRFLVALYY.

It belongs to the peptidase S1 family. Snake venom subfamily. As to quaternary structure, monomer. In terms of processing, glycosylated. In terms of tissue distribution, expressed by the venom gland.

The protein resides in the secreted. Its activity is regulated as follows. Strongly inactivated by diisopropylfluorophosphate (DFP) and to a lesser extent by tosyl-L-lysine chloromethyl ketone (TLCK). In terms of biological role, thrombin-like snake venom serine protease. Releases both fibrinopeptides A and B from fibrinogen (FGA and FGB) to form fibrin clots. The sequence is that of Thrombin-like enzyme okinaxobin-2 from Ovophis okinavensis (Ryukyu Island pit viper).